A 148-amino-acid polypeptide reads, in one-letter code: Snaclec jerdonuxin subunit beta (148 aa).

The first 23 residues, 1–23 (MVRFIFVSFGLLVVFLSLSGIGA), serve as a signal peptide directing secretion. Intrachain disulfides connect Cys27-Cys38, Cys55-Cys144, and Cys121-Cys136. The region spanning 34 to 145 (YDEHCYQVFQ…CSSKRYIVCK (112 aa)) is the C-type lectin domain.

This sequence belongs to the snaclec family. In terms of assembly, tetramer of 4 heterodimers of alpha and beta subunits; disulfide-linked. As to expression, expressed by the venom gland.

Its subcellular location is the secreted. Its function is as follows. Snaclec that strongly induces platelet aggregation, in a dose-dependent manner. The polypeptide is Snaclec jerdonuxin subunit beta (Protobothrops jerdonii (Jerdon's pitviper)).